A 272-amino-acid chain; its full sequence is Phosphatidylglycerol--prolipoprotein diacylglyceryl transferase (272 aa).

A run of 7 helical transmembrane segments spans residues leucine 17–alanine 37, leucine 55–tyrosine 75, valine 90–phenylalanine 110, phenylalanine 125–glycine 145, proline 174–phenylalanine 194, methionine 202–phenylalanine 222, and glycine 230–isoleucine 250. Arginine 138 is a binding site for a 1,2-diacyl-sn-glycero-3-phospho-(1'-sn-glycerol).

The protein belongs to the Lgt family.

The protein resides in the cell inner membrane. It catalyses the reaction L-cysteinyl-[prolipoprotein] + a 1,2-diacyl-sn-glycero-3-phospho-(1'-sn-glycerol) = an S-1,2-diacyl-sn-glyceryl-L-cysteinyl-[prolipoprotein] + sn-glycerol 1-phosphate + H(+). It functions in the pathway protein modification; lipoprotein biosynthesis (diacylglyceryl transfer). Its function is as follows. Catalyzes the transfer of the diacylglyceryl group from phosphatidylglycerol to the sulfhydryl group of the N-terminal cysteine of a prolipoprotein, the first step in the formation of mature lipoproteins. This chain is Phosphatidylglycerol--prolipoprotein diacylglyceryl transferase, found in Acinetobacter baumannii (strain SDF).